A 211-amino-acid polypeptide reads, in one-letter code: uncharacterized protein (211 aa).

This is an uncharacterized protein from Treponema pallidum (strain Nichols).